We begin with the raw amino-acid sequence, 225 residues long: UPF0758 protein BPP1850 (225 aa).

The MPN domain occupies 103–225 (ALANPDLVRR…TVSMAAQGHL (123 aa)). Positions 174, 176, and 187 each coordinate Zn(2+). The JAMM motif signature appears at 174-187 (HNHPGGTAAASAAD).

It belongs to the UPF0758 family.

This Bordetella parapertussis (strain 12822 / ATCC BAA-587 / NCTC 13253) protein is UPF0758 protein BPP1850.